The chain runs to 172 residues: Achaete-scute homolog 4 (172 aa).

Residues 72–124 form the bHLH domain; the sequence is AFLRKRNERERQRVRCVNEGYARLRDHLPRELADKRLSKVETLRAAIDYIKHL. A disordered region spans residues 144-172; the sequence is QRRAECNSDGESKASSAPSPSSEPEEGGS. Residues 145 to 155 are compositionally biased toward basic and acidic residues; that stretch reads RRAECNSDGES. Over residues 156–165 the composition is skewed to low complexity; it reads KASSAPSPSS.

As to expression, expressed in skin. 7-fold higher expression in fetal skin than in adult skin. Weak expression also detected in fetal lung, aorta and brain, and in adult stomach, kidney, ovary and breast.

Its subcellular location is the nucleus. In terms of biological role, could be a transcriptional regulator involved in skin development. This is Achaete-scute homolog 4 (ASCL4) from Homo sapiens (Human).